The primary structure comprises 408 residues: Aspartate aminotransferase, cytoplasmic (408 aa).

The L-aspartate site is built by Gly36, Trp133, and Asn187. At Lys251 the chain carries N6-(pyridoxal phosphate)lysine. Residue Arg379 participates in L-aspartate binding.

The protein belongs to the class-I pyridoxal-phosphate-dependent aminotransferase family. Homodimer. Pyridoxal 5'-phosphate is required as a cofactor. Expressed in all somatic tissues including the nervous system.

The protein localises to the cytoplasm. The catalysed reaction is L-aspartate + 2-oxoglutarate = oxaloacetate + L-glutamate. Its function is as follows. Biosynthesis of L-glutamate from L-aspartate. Important regulator of levels of glutamate, the major excitatory neurotransmitter of the central nervous system. The polypeptide is Aspartate aminotransferase, cytoplasmic (Caenorhabditis elegans).